We begin with the raw amino-acid sequence, 214 residues long: Thymidylate kinase (214 aa).

Position 13-20 (13-20) interacts with ATP; the sequence is GPDACGKS.

This sequence belongs to the thymidylate kinase family.

The enzyme catalyses dTMP + ATP = dTDP + ADP. Its function is as follows. Phosphorylation of dTMP to form dTDP in both de novo and salvage pathways of dTTP synthesis. The sequence is that of Thymidylate kinase from Malacoplasma penetrans (strain HF-2) (Mycoplasma penetrans).